The following is a 440-amino-acid chain: Sialyltransferase-like protein 2 (440 aa).

The Cytoplasmic portion of the chain corresponds to 1 to 5 (MKLLH). The chain crosses the membrane as a helical; Signal-anchor for type II membrane protein span at residues 6 to 26 (LIFLLALTTGISAVLIYIIGV). The Lumenal portion of the chain corresponds to 27 to 440 (SNLYESNRFT…HGQLCITPAD (414 aa)). Residues Asn-113 and Asn-149 are each glycosylated (N-linked (GlcNAc...) asparagine).

It belongs to the glycosyltransferase 29 family.

The protein localises to the golgi apparatus membrane. May be involved in the transfer of 2-keto-3-deoxy-D-lyxo-heptulosaric acid (Dha) and/or 2-keto-3-deoxy-D-manno-octulosonic acid (Kdo) on the homogalacturonan backbone of rhamnogalacturonan-II. Required for efficient pollen grain germination and pollen tube elongation. Does not possess sialyltransferase activity in vitro. The protein is Sialyltransferase-like protein 2 of Arabidopsis thaliana (Mouse-ear cress).